Here is a 132-residue protein sequence, read N- to C-terminus: uncharacterized protein (132 aa).

This is an uncharacterized protein from Sinorhizobium fredii (strain NBRC 101917 / NGR234).